Consider the following 444-residue polypeptide: UDP-N-acetylmuramoylalanine--D-glutamate ligase (444 aa).

Position 113-119 (113-119 (GSNGKST)) interacts with ATP.

The protein belongs to the MurCDEF family.

Its subcellular location is the cytoplasm. It carries out the reaction UDP-N-acetyl-alpha-D-muramoyl-L-alanine + D-glutamate + ATP = UDP-N-acetyl-alpha-D-muramoyl-L-alanyl-D-glutamate + ADP + phosphate + H(+). It participates in cell wall biogenesis; peptidoglycan biosynthesis. Its function is as follows. Cell wall formation. Catalyzes the addition of glutamate to the nucleotide precursor UDP-N-acetylmuramoyl-L-alanine (UMA). This is UDP-N-acetylmuramoylalanine--D-glutamate ligase from Blochmanniella floridana.